A 161-amino-acid chain; its full sequence is Ribosomal RNA large subunit methyltransferase H (161 aa).

S-adenosyl-L-methionine contacts are provided by residues Leu-78, Gly-110, and 129–134; that span reads LGRMTF.

This sequence belongs to the RNA methyltransferase RlmH family. Homodimer.

It is found in the cytoplasm. It catalyses the reaction pseudouridine(1915) in 23S rRNA + S-adenosyl-L-methionine = N(3)-methylpseudouridine(1915) in 23S rRNA + S-adenosyl-L-homocysteine + H(+). Specifically methylates the pseudouridine at position 1915 (m3Psi1915) in 23S rRNA. This chain is Ribosomal RNA large subunit methyltransferase H, found in Symbiobacterium thermophilum (strain DSM 24528 / JCM 14929 / IAM 14863 / T).